A 149-amino-acid chain; its full sequence is Transcriptional repressor NrdR (149 aa).

The segment at 3–34 (CPFCSATDTKVIDSRLVAEGHQVRRRRECTEC) is a zinc-finger region. The 91-residue stretch at 49–139 (PRVIKRDGSR…VYRAFEDVSE (91 aa)) folds into the ATP-cone domain.

The protein belongs to the NrdR family. It depends on Zn(2+) as a cofactor.

Negatively regulates transcription of bacterial ribonucleotide reductase nrd genes and operons by binding to NrdR-boxes. This chain is Transcriptional repressor NrdR, found in Shewanella putrefaciens (strain CN-32 / ATCC BAA-453).